The sequence spans 332 residues: L-lactate dehydrogenase A chain (332 aa).

The residue at position 2 (alanine 2) is an N-acetylalanine. Lysine 5 bears the N6-acetyllysine; alternate mark. Lysine 5 is subject to N6-succinyllysine; alternate. Tyrosine 10 is modified (phosphotyrosine). Lysine 14 carries the post-translational modification N6-acetyllysine. Threonine 18 is modified (phosphothreonine). 29–57 (GAVGMACAISILMKDLADELALVDVIEDK) is a binding site for NAD(+). Lysine 57 carries the post-translational modification N6-acetyllysine; alternate. A Glycyl lysine isopeptide (Lys-Gly) (interchain with G-Cter in SUMO2); alternate cross-link involves residue lysine 57. Lysine 81 bears the N6-acetyllysine mark. Residue arginine 99 participates in NAD(+) binding. Arginine 106 provides a ligand contact to substrate. Lysine 118 is modified (N6-acetyllysine; alternate). An N6-succinyllysine; alternate modification is found at lysine 118. Lysine 126 carries the post-translational modification N6-acetyllysine. Residue asparagine 138 coordinates NAD(+). Residues asparagine 138 and arginine 169 each coordinate substrate. The active-site Proton acceptor is the histidine 193. Lysine 224 and lysine 232 each carry N6-acetyllysine. Tyrosine 239 carries the post-translational modification Phosphotyrosine. Lysine 243 carries the N6-acetyllysine modification. Threonine 248 provides a ligand contact to substrate. Threonine 309 carries the phosphothreonine modification. Serine 310 is subject to Phosphoserine. Lysine 318 carries the post-translational modification N6-acetyllysine; alternate. Lysine 318 is modified (N6-succinyllysine; alternate). The residue at position 322 (threonine 322) is a Phosphothreonine.

The protein belongs to the LDH/MDH superfamily. LDH family. Homotetramer. Interacts with PTEN upstream reading frame protein MP31. Interacts with folliculin FLCN; the interaction is direct and inhibits enzymatic activity. ISGylated. In terms of tissue distribution, predominantly expressed in anaerobic tissues such as skeletal muscle and liver.

It is found in the cytoplasm. The catalysed reaction is (S)-lactate + NAD(+) = pyruvate + NADH + H(+). The protein operates within fermentation; pyruvate fermentation to lactate; (S)-lactate from pyruvate: step 1/1. Fermentation of pyruvate to lactate is inhibited when bound to folliculin FLCN, perhaps partly by FLCN preventing binding of cofactor NADH. Functionally, interconverts simultaneously and stereospecifically pyruvate and lactate with concomitant interconversion of NADH and NAD(+). The protein is L-lactate dehydrogenase A chain of Homo sapiens (Human).